Reading from the N-terminus, the 73-residue chain is Large ribosomal subunit protein bL31 (73 aa).

Belongs to the bacterial ribosomal protein bL31 family. Type A subfamily. As to quaternary structure, part of the 50S ribosomal subunit.

Functionally, binds the 23S rRNA. This is Large ribosomal subunit protein bL31 from Sinorhizobium fredii (strain NBRC 101917 / NGR234).